A 247-amino-acid polypeptide reads, in one-letter code: UPF0259 membrane protein BU276 (247 aa).

6 consecutive transmembrane segments (helical) span residues 20-40 (IGAI…IDMF), 85-105 (IMES…LISV), 114-134 (IVSS…LNFL), 137-157 (FIIQ…SIIL), 188-208 (IIGP…MLLA), and 218-238 (LFLI…IYLF).

This sequence belongs to the UPF0259 family.

The protein resides in the cell membrane. This chain is UPF0259 membrane protein BU276, found in Buchnera aphidicola subsp. Acyrthosiphon pisum (strain APS) (Acyrthosiphon pisum symbiotic bacterium).